The following is a 430-amino-acid chain: Adenylosuccinate synthetase (430 aa).

GTP-binding positions include Gly12–Lys18 and Gly40–Thr42. Residue Asp13 is the Proton acceptor of the active site. The Mg(2+) site is built by Asp13 and Gly40. Residues Asp13 to Lys16, Asn38 to His41, Thr130, Arg144, Gln224, Thr239, and Arg303 each bind IMP. The active-site Proton donor is His41. Position 299-305 (Val299–Arg305) interacts with substrate. Residues Arg305, Lys331–Asp333, and Ser413–Ser415 contribute to the GTP site.

The protein belongs to the adenylosuccinate synthetase family. Homodimer. Mg(2+) is required as a cofactor.

The protein localises to the cytoplasm. It catalyses the reaction IMP + L-aspartate + GTP = N(6)-(1,2-dicarboxyethyl)-AMP + GDP + phosphate + 2 H(+). It participates in purine metabolism; AMP biosynthesis via de novo pathway; AMP from IMP: step 1/2. Plays an important role in the de novo pathway of purine nucleotide biosynthesis. Catalyzes the first committed step in the biosynthesis of AMP from IMP. This Rhodopseudomonas palustris (strain BisA53) protein is Adenylosuccinate synthetase.